We begin with the raw amino-acid sequence, 301 residues long: Heterogeneous nuclear ribonucleoprotein D-like (301 aa).

RRM domains are found at residues 29–111 and 114–193; these read GKMF…KGKE and KKVF…QPKE. The residue at position 42 (K42) is an N6-methyllysine. A Glycyl lysine isopeptide (Lys-Gly) (interchain with G-Cter in SUMO2) cross-link involves residue K90. K97 is modified (N6-acetyllysine). S122 carries the phosphoserine modification. 2 disordered regions span residues 194–229 and 279–301; these read VYRQQQQQQKGGRGAAAGGRGGARGRGRGQGQNWNQ and GQQSTYGKASRGGGNHQNNYQPY. Residues 204–223 show a composition bias toward gly residues; sequence GGRGAAAGGRGGARGRGRGQ. The segment at 223–301 is necessary for interaction with TNPO1; sequence QGQNWNQGFN…GNHQNNYQPY (79 aa). R289 carries the dimethylated arginine; alternate modification. Position 289 is an omega-N-methylarginine; alternate (R289).

Interacts with TNPO1. Interacts with ZNF148. In terms of processing, dimethylation of Arg-289 is probably of the asymmetric type. In terms of tissue distribution, expressed in skeletal muscle, myoblast, myotube, heart, brain, liver, kidney, heart, lung, stomach, small intestine, large intestine, spleen, and testis (at protein level). Expressed in brain, skeletal muscle, heart, lung, liver, stomach, small intestine, large intestine, kidney, spleen and testis.

The protein localises to the nucleus. The protein resides in the cytoplasm. Acts as a transcriptional regulator. Promotes transcription repression. Promotes transcription activation in differentiated myotubes. Binds to double- and single-stranded DNA sequences. Binds to the transcription suppressor CATR sequence of the COX5B promoter. Binds with high affinity to RNA molecules that contain AU-rich elements (AREs) found within the 3'-UTR of many proto-oncogenes and cytokine mRNAs. Binds both to nuclear and cytoplasmic poly(A) mRNAs. Binds to poly(G) and poly(A), but not to poly(U) or poly(C) RNA homopolymers. Binds to the 5'-ACUAGC-3' RNA consensus sequence. The sequence is that of Heterogeneous nuclear ribonucleoprotein D-like (Hnrnpdl) from Mus musculus (Mouse).